Here is a 98-residue protein sequence, read N- to C-terminus: NADH-ubiquinone oxidoreductase chain 4L (98 aa).

A run of 3 helical transmembrane segments spans residues 1–21 (MSMV…GMLV), 29–49 (SLLC…VTIL), and 61–81 (IVLL…LVMV).

It belongs to the complex I subunit 4L family. Core subunit of respiratory chain NADH dehydrogenase (Complex I) which is composed of 45 different subunits.

It is found in the mitochondrion inner membrane. The catalysed reaction is a ubiquinone + NADH + 5 H(+)(in) = a ubiquinol + NAD(+) + 4 H(+)(out). Core subunit of the mitochondrial membrane respiratory chain NADH dehydrogenase (Complex I) which catalyzes electron transfer from NADH through the respiratory chain, using ubiquinone as an electron acceptor. Part of the enzyme membrane arm which is embedded in the lipid bilayer and involved in proton translocation. The polypeptide is NADH-ubiquinone oxidoreductase chain 4L (MT-ND4L) (Vulpes vulpes (Red fox)).